We begin with the raw amino-acid sequence, 317 residues long: Small ribosomal subunit protein uS2 (317 aa).

Residue Ser2 is modified to N-acetylserine. Laminin-binding regions lie at residues 161 to 180 and 205 to 229; these read IPCNNKGPHSVGLMWWMLAR and RDPEEIEKEEQAAAEKAVGKEEFQG. [DE]-W-[ST] repeat units lie at residues 230 to 232, 245 to 247, 288 to 290, 297 to 299, and 315 to 317; these read EWS and DWS. Residues 242-317 form a laminin-binding region; the sequence is EVPDWSEGVQ…DWGGSTAEWS (76 aa). A disordered region spans residues 278–317; the sequence is PGPTTEGYSEDWSAQPATEDWSAAPTAQAGDWGGSTAEWS.

The protein belongs to the universal ribosomal protein uS2 family. As to quaternary structure, monomer (37LRP) and homodimer (67LR). Component of the small ribosomal subunit. Mature ribosomes consist of a small (40S) and a large (60S) subunit. The 40S subunit contains about 33 different proteins and 1 molecule of RNA (18S). The 60S subunit contains about 49 different proteins and 3 molecules of RNA (28S, 5.8S and 5S). Interacts with rps21. Interacts with several laminins including at least lamb1. Interacts with mdk. In terms of processing, acylated. Acylation may be a prerequisite for conversion of the monomeric 37 kDa laminin receptor precursor (37LRP) to the mature dimeric 67 kDa laminin receptor (67LR), and may provide a mechanism for membrane association. Post-translationally, cleaved by stromelysin-3 (ST3) at the cell surface. Cleavage by stromelysin-3 may be a mechanism to alter cell-extracellular matrix interactions.

The protein resides in the cell membrane. The protein localises to the cytoplasm. Its subcellular location is the nucleus. Functionally, required for the assembly and/or stability of the 40S ribosomal subunit. Required for the processing of the 20S rRNA-precursor to mature 18S rRNA in a late step of the maturation of 40S ribosomal subunits. Also functions as a cell surface receptor for laminin. Plays a role in cell adhesion to the basement membrane and in the consequent activation of signaling transduction pathways. May play a role in cell fate determination and tissue morphogenesis. This Ictalurus punctatus (Channel catfish) protein is Small ribosomal subunit protein uS2 (rpsa).